Here is a 275-residue protein sequence, read N- to C-terminus: Penicillin-insensitive murein endopeptidase (275 aa).

The first 19 residues, Met1–Ala19, serve as a signal peptide directing secretion. 3 disulfide bridges follow: Cys44–Cys264, Cys187–Cys235, and Cys216–Cys223. His110, His113, Asp120, Asp147, and His211 together coordinate Zn(2+). Positions Gly234–Pro262 are disordered.

The protein belongs to the peptidase M74 family. Dimer. Zn(2+) serves as cofactor.

It is found in the periplasm. Its function is as follows. Murein endopeptidase that cleaves the D-alanyl-meso-2,6-diamino-pimelyl amide bond that connects peptidoglycan strands. Likely plays a role in the removal of murein from the sacculus. This Yersinia enterocolitica serotype O:8 / biotype 1B (strain NCTC 13174 / 8081) protein is Penicillin-insensitive murein endopeptidase.